We begin with the raw amino-acid sequence, 473 residues long: Mogroside IIIx synthase (473 aa).

Histidine 21 functions as the Proton acceptor in the catalytic mechanism. The Charge relay role is filled by aspartate 123. Positions 274, 337, 355, 356, 357, 360, 376, and 377 each coordinate UDP-alpha-D-glucose.

The protein belongs to the UDP-glycosyltransferase family. Highly expressed in mature fruits.

It carries out the reaction mogroside IIE + UDP-alpha-D-glucose = mogroside IIIX + UDP + H(+). The enzyme catalyses mogroside III + UDP-alpha-D-glucose = siamenoside I + UDP + H(+). It participates in secondary metabolite biosynthesis; terpenoid biosynthesis. Functionally, UDP-glycosyltransferase involved in the biosynthesis of cucurbitacin and mogroside tetracyclic triterpene natural products (e.g. siamenoside I and mogrosides IV, V and VI). Cucurbitacins have cytotoxic properties and exhibit deterrent taste as a defense barrier against herbivores. Mogrosides are nonsugar highly oxygenated compounds used as high-intensity zero-calorie sweeteners; they also possess pharmacological properties such as regulating immunity, lowering blood sugar and lipid levels, protecting the liver, and acting as antioxidants and antitumor agents. Catalyzes the branched glucosylations of mogroside II-E and mogroside III. The protein is Mogroside IIIx synthase of Siraitia grosvenorii (Monk's fruit).